A 160-amino-acid chain; its full sequence is CXXC motif containing zinc binding protein (160 aa).

Zn(2+) is bound by residues C33, C36, C67, and C70. A Phosphoserine modification is found at S75.

This sequence belongs to the UPF0587 family. As to quaternary structure, monomer.

The chain is CXXC motif containing zinc binding protein from Homo sapiens (Human).